Reading from the N-terminus, the 176-residue chain is Ribosome maturation factor RimM (176 aa).

In terms of domain architecture, PRC barrel spans 99–174; that stretch reads KDEFYVRDLI…IVLIQPELWN (76 aa).

The protein belongs to the RimM family. In terms of assembly, binds ribosomal protein uS19.

It is found in the cytoplasm. In terms of biological role, an accessory protein needed during the final step in the assembly of 30S ribosomal subunit, possibly for assembly of the head region. Essential for efficient processing of 16S rRNA. May be needed both before and after RbfA during the maturation of 16S rRNA. It has affinity for free ribosomal 30S subunits but not for 70S ribosomes. In Leptospira borgpetersenii serovar Hardjo-bovis (strain JB197), this protein is Ribosome maturation factor RimM.